The chain runs to 72 residues: Putative sodium channel toxin Ts18 (72 aa).

The signal sequence occupies residues 1–21 (MNFRFPFLLMITISLIGAVLT). 3 disulfide bridges follow: Cys38-Cys61, Cys47-Cys66, and Cys51-Cys68.

The protein belongs to the long (3 C-C) scorpion toxin superfamily. Expressed by the venom gland.

The protein localises to the secreted. Binds to sodium channels (Nav) and affects the channel activation process. This chain is Putative sodium channel toxin Ts18, found in Tityus serrulatus (Brazilian scorpion).